The primary structure comprises 241 residues: Thiamine import ATP-binding protein ThiQ (241 aa).

The ABC transporter domain maps to I7–I235. Residue G37–S44 participates in ATP binding.

Belongs to the ABC transporter superfamily. Thiamine importer (TC 3.A.1.19.1) family. In terms of assembly, the complex is composed of two ATP-binding proteins (ThiQ), two transmembrane proteins (ThiP) and a solute-binding protein (ThiB).

The protein resides in the cell inner membrane. The enzyme catalyses thiamine(out) + ATP + H2O = thiamine(in) + ADP + phosphate + H(+). In terms of biological role, part of the ABC transporter complex ThiBPQ involved in thiamine import. Responsible for energy coupling to the transport system. This chain is Thiamine import ATP-binding protein ThiQ, found in Brucella melitensis biotype 1 (strain ATCC 23456 / CCUG 17765 / NCTC 10094 / 16M).